The following is a 300-amino-acid chain: Lysenin-related protein 2 (300 aa).

The N-terminal cap domain stretch occupies residues 12 to 35 (EQIEVDVVAVWKEGYVYENRGSTS). A beta-hairpin domain region spans residues 36 to 109 (VEQKIKITKG…SKEIEHTITI (74 aa)). An N-terminal cap domain region spans residues 110-158 (PPTSKFTRWQLNADVGGADIEYMYLIDEVTPIGGTLSIPQVIKSRAKIL). The C-terminal receptor-binding domain stretch occupies residues 159-299 (VGREIYLGET…EDKWILEVVK (141 aa)). 4 residues coordinate an N-(acyl)-sphingosylphosphocholine: Lys-187, Ser-229, Tyr-235, and Tyr-284. Cys-274 and Cys-285 are oxidised to a cystine.

The protein belongs to the lysenin family. Binds to sphingomyelin as a monomer by using its C-terminal domain. Forms a nonamer when sphingomyelin/LRP-2 ratio is lower than ca 500. Oligomerization, but not binding, is influenced by the fluidity of sphingomyelin. Expressed by coelomocytes.

The protein localises to the secreted. The protein resides in the target cell membrane. In terms of biological role, pore-forming toxin that specifically binds sphingomyelin in the plasma membrane of various cells. Has hemolytic activity. It also has antibacterial activities against B.megaterium. The chain is Lysenin-related protein 2 from Eisenia fetida (Red wiggler worm).